Consider the following 808-residue polypeptide: Sucrose synthase isoform 1 (808 aa).

A GT-B glycosyltransferase region spans residues 277-754; the sequence is MVFNVVILSP…GLKRIQEKYT (478 aa).

This sequence belongs to the glycosyltransferase 1 family. Plant sucrose synthase subfamily. As to quaternary structure, homotetramer. Expressed in stems, in roots at different developmental stages, and in flower buds, flowers and maturing seeds, with the highest levels in strong utilization sinks for sucrose such as growing stems and tap root tips.

The catalysed reaction is an NDP-alpha-D-glucose + D-fructose = a ribonucleoside 5'-diphosphate + sucrose + H(+). Fructose acts as a non-competitive inhibitor with an inhibition constant of 17.2 mM. In contrast, glucose inhibits uncompetitively with an inhibition constant of 4.3 mM. Functionally, sucrose-cleaving enzyme that provides UDP-glucose and fructose for various metabolic pathways. This is Sucrose synthase isoform 1 from Daucus carota (Wild carrot).